A 110-amino-acid chain; its full sequence is Integration host factor subunit alpha (110 aa).

The protein belongs to the bacterial histone-like protein family. Heterodimer of an alpha and a beta chain.

In terms of biological role, this protein is one of the two subunits of integration host factor, a specific DNA-binding protein that functions in genetic recombination as well as in transcriptional and translational control. The protein is Integration host factor subunit alpha of Delftia acidovorans (strain DSM 14801 / SPH-1).